A 350-amino-acid polypeptide reads, in one-letter code: Anthranilate phosphoribosyltransferase (350 aa).

5-phospho-alpha-D-ribose 1-diphosphate-binding positions include G94, 97-98, T102, 104-107, 122-130, and S134; these read GD, NIST, and KHGNRSVSS. Anthranilate is bound at residue G94. S106 serves as a coordination point for Mg(2+). N125 contacts anthranilate. R180 provides a ligand contact to anthranilate. Mg(2+) contacts are provided by D239 and E240.

This sequence belongs to the anthranilate phosphoribosyltransferase family. Homodimer. It depends on Mg(2+) as a cofactor.

It catalyses the reaction N-(5-phospho-beta-D-ribosyl)anthranilate + diphosphate = 5-phospho-alpha-D-ribose 1-diphosphate + anthranilate. It participates in amino-acid biosynthesis; L-tryptophan biosynthesis; L-tryptophan from chorismate: step 2/5. In terms of biological role, catalyzes the transfer of the phosphoribosyl group of 5-phosphorylribose-1-pyrophosphate (PRPP) to anthranilate to yield N-(5'-phosphoribosyl)-anthranilate (PRA). The chain is Anthranilate phosphoribosyltransferase from Geotalea daltonii (strain DSM 22248 / JCM 15807 / FRC-32) (Geobacter daltonii).